The following is a 445-amino-acid chain: MDEEYEVIVLGTGLKECILSGLLSVDGLKVLHMDRNDYYGGESTSLNLNQLWKKFRGEEKAPAHLGSSRDYNVDMMPKFMMANGKLVRVLIHTDVTKYLSFKAVDGSYVFVQGKVQKVPATPMEALKSPLMGIFEKRRAGKFFSYVQEYDEKDPKTHDGMDLRRVTTKDLIAKFGLKEDTIDFIGHAVALHCNDNHLHQPAYDTVMRMKLYAESLARFQGGSPYIYPLYGLGELPQAFARLSAVYGGTYMLNKPECKVEFDEEGKVSGVTSEGETAKCKKVVCDPSYLTNKVRKIGRVARAIAIMSHPIPNTNDSQSVQVILPQKQLGRKSDMYVFCCSYSHNVAPKGKFIAFVSTDAETDNPQTELQPGIDLLGPVDELFFDIYDRYEPVNEPTLDNCFISTSYDATTHFDTTVVDVLNMYKLITGKELDLSVDLNAASAAEEE.

It belongs to the Rab GDI family. Interacts with the GDP-bound form of RABA5C (via C-terminus). In terms of tissue distribution, expressed in roots, rosette leaves, stems, floral buds and siliques.

In terms of biological role, regulates the GDP/GTP exchange reaction of most RAB proteins by inhibiting the dissociation of GDP from them, and the subsequent binding of GTP. The protein is Guanosine nucleotide diphosphate dissociation inhibitor 1 (GDI1) of Arabidopsis thaliana (Mouse-ear cress).